Consider the following 145-residue polypeptide: Transcription antitermination protein NusB (145 aa).

Belongs to the NusB family.

In terms of biological role, involved in transcription antitermination. Required for transcription of ribosomal RNA (rRNA) genes. Binds specifically to the boxA antiterminator sequence of the ribosomal RNA (rrn) operons. This chain is Transcription antitermination protein NusB, found in Geotalea daltonii (strain DSM 22248 / JCM 15807 / FRC-32) (Geobacter daltonii).